The chain runs to 258 residues: Alpha-fibrinogenase albofibrase (258 aa).

Residues 1-18 (MVLIRVLANLLILQLSYA) form the signal peptide. Positions 19–24 (QKSSEL) are excised as a propeptide. A Peptidase S1 domain is found at 25 to 249 (VVGGDECNIN…YNDWIQSIIA (225 aa)). 6 disulfide bridges follow: cysteine 31–cysteine 163, cysteine 50–cysteine 66, cysteine 98–cysteine 256, cysteine 142–cysteine 210, cysteine 174–cysteine 189, and cysteine 200–cysteine 225. The N-linked (GlcNAc...) asparagine glycan is linked to asparagine 44. Residues histidine 65 and aspartate 110 each act as charge relay system in the active site. The Charge relay system role is filled by serine 204.

Belongs to the peptidase S1 family. Snake venom subfamily. Monomer. In terms of tissue distribution, expressed by the venom gland.

The protein localises to the secreted. In terms of biological role, the recombinant protein has fibrinogenolytic activity against the Aalpha chain (FGA) of fibrinogen. Activates plasminogen (PLG) (is 4-fold less active than urokinase). Has weak thrombin-like enzyme activity. Has enzymatic activity against a trypsin-like substrate (S-3013) and shows a weaker activity on an activated protein C substrate (S-3125). The sequence is that of Alpha-fibrinogenase albofibrase from Trimeresurus albolabris (White-lipped pit viper).